Here is a 238-residue protein sequence, read N- to C-terminus: Chromosome partition protein MukE (238 aa).

Belongs to the MukE family. As to quaternary structure, interacts, and probably forms a ternary complex, with MukF and MukB. The complex formation is stimulated by calcium or magnesium.

It is found in the cytoplasm. It localises to the nucleoid. In terms of biological role, involved in chromosome condensation, segregation and cell cycle progression. May participate in facilitating chromosome segregation by condensation DNA from both sides of a centrally located replisome during cell division. Probably acts via its interaction with MukB and MukF. This is Chromosome partition protein MukE from Haemophilus ducreyi (strain 35000HP / ATCC 700724).